Here is a 517-residue protein sequence, read N- to C-terminus: Zinc finger protein AEBP2 (517 aa).

The interval 1–229 (MAAAITDMAD…DSEDSISSTI (229 aa)) is disordered. Ala2 bears the N-acetylalanine mark. 2 positions are modified to phosphoserine: Ser18 and Ser24. Residues 36–51 (PEEEEEEEEEEEEAEA) show a composition bias toward acidic residues. The segment covering 61–78 (GGSGGGGGGGGGGVGGGE) has biased composition (gly residues). The segment covering 94 to 121 (GEDEDEEEDDEEEEDESSSSGGGEEESS) has biased composition (acidic residues). A compositionally biased stretch (low complexity) spans 122–150 (AESLVGSSGGSSSDETRSLSPGAASSSSG). The residue at position 141 (Ser141) is a Phosphoserine. Basic and acidic residues predominate over residues 152-163 (GDGKEGLEEPKG). Gly residues-rich tracts occupy residues 166–175 (GSQGGGGGGS) and 185–196 (GDEGYGTGGGGS). 3 positions are modified to phosphoserine: Ser206, Ser210, and Ser211. An interaction with RBBP4 region spans residues 209–294 (MSSDGEPLSR…IHVDGQRGGV (86 aa)). Residues 261-286 (YNCCWDQCQACFNSSPDLADHIRSIH) form a C2H2-type 1 zinc finger. The C2H2-type 2; degenerate zinc-finger motif lies at 300–322 (KGCKVYNTPSTSQSWLQRHMLTH). The C2H2-type 3 zinc finger occupies 328–352 (FKCVVGGCNASFASQGGLARHVPTH). Polar residues predominate over residues 352 to 365 (HFSQQNSSKVSSQP). Residues 352–394 (HFSQQNSSKVSSQPKAKEESPSKAGMNKRRKLKNKRRRSLPRP) form a disordered region. The segment covering 377–392 (MNKRRKLKNKRRRSLP) has biased composition (basic residues). Ser390 carries the post-translational modification Phosphoserine. The segment at 407–478 (RHRAICFNLS…QLKTKVVHLS (72 aa)) is interaction with SUZ12. Residues 495–517 (TMPQKRLKRTLIRKVFNLYLSKQ) are important for nucleosome binding activity of the PRC2 complex.

This sequence belongs to the AEBP2/jing C2H2-type zinc-finger family. As to quaternary structure, self-associates. Associates with the PRC2 complex, which consists of the core components EED, EZH1 or EZH2, SUZ12, and RBBP4, and various combinations of accessory subunits including AEBP2, JARID2, PHF19, MTF2 and EPOP. Found in a monomeric PRC2.2 (class 2) complex consisting of at least SUZ12, RBBP4, AEBP2 and JARID2. Within the PRC2 complex, interacts directly with SUZ12; competes with PHF19 for SUZ12 binding. Interacts with EED, EZH2, and RBBP4. May also interact with RBBP7.

The protein localises to the nucleus. Acts as an accessory subunit for the core Polycomb repressive complex 2 (PRC2), which mediates histone H3K27 (H3K27me3) trimethylation on chromatin leading to transcriptional repression of the affected target gene. Plays a role in nucleosome localization of the PRC2 complex. This is Zinc finger protein AEBP2 (AEBP2) from Homo sapiens (Human).